The primary structure comprises 181 residues: Dual-action ribosomal maturation protein DarP (181 aa).

The disordered stretch occupies residues 1-23 (MTGIKKPMSQYQDDNELEDWGPS).

This sequence belongs to the DarP family.

The protein resides in the cytoplasm. Its function is as follows. Member of a network of 50S ribosomal subunit biogenesis factors which assembles along the 30S-50S interface, preventing incorrect 23S rRNA structures from forming. Promotes peptidyl transferase center (PTC) maturation. This chain is Dual-action ribosomal maturation protein DarP, found in Aeromonas salmonicida (strain A449).